The sequence spans 364 residues: DNA replication and repair protein RecF (364 aa).

Position 30 to 37 (30 to 37 (GNNGMGKT)) interacts with ATP.

The protein belongs to the RecF family.

It is found in the cytoplasm. Functionally, the RecF protein is involved in DNA metabolism; it is required for DNA replication and normal SOS inducibility. RecF binds preferentially to single-stranded, linear DNA. It also seems to bind ATP. The chain is DNA replication and repair protein RecF from Porphyromonas gingivalis (strain ATCC 33277 / DSM 20709 / CIP 103683 / JCM 12257 / NCTC 11834 / 2561).